We begin with the raw amino-acid sequence, 224 residues long: Response regulator protein GraR (224 aa).

The Response regulatory domain occupies 2 to 115; it reads QILLVEDDNT…VLIAKLQAIY (114 aa). Asp-51 is modified (4-aspartylphosphate). Positions 126–224 form a DNA-binding region, ompR/PhoB-type; it reads KRTLTWQDAV…KVGKGYMAHE (99 aa). Residues Thr-128, Thr-130, and Thr-149 each carry the phosphothreonine modification.

In terms of assembly, interacts with GraX. Post-translationally, phosphorylated by GraS. Phosphorylated by Stk1; phosphorylation increases the DNA-binding activity of GraR.

The protein localises to the cytoplasm. Its function is as follows. Member of the two-component regulatory system GraR/GraS involved in resistance against cationic antimicrobial peptides (CAMPs). Upon phosphorylation by GraS, functions as a transcription regulator by direct binding to promoter regions of target genes such as adhesins, exoproteins, transporters, toxins, and proteins involved in cell wall synthesis. Down-regulates the expression of many genes involved in RNA and amino acid synthesis or glycolysis. The polypeptide is Response regulator protein GraR (graR) (Staphylococcus aureus (strain USA300)).